Here is a 732-residue protein sequence, read N- to C-terminus: Probable boron transporter 3 (732 aa).

The residue at position 1 (Met1) is an N-acetylmethionine. Residues 1 to 37 (MDEAESFVPFQGIKKDVKGRLNCYKQDWISGLRAGFR) are Cytoplasmic-facing. The helical transmembrane segment at 38 to 58 (ILAPTTYIFFASAIPVITFGE) threads the bilayer. The Extracellular portion of the chain corresponds to 59-77 (QLERDTDGKITAVQTLVST). The helical transmembrane segment at 78-98 (ALCGVIHSIIGGQPLLILGVA) threads the bilayer. The Cytoplasmic portion of the chain corresponds to 99–123 (EPTVIMYTFMFNFAKSRTDLGSNLF). Residues 124 to 144 (LAWTGWVCLWTGLLLFLLAVL) form a helical membrane-spanning segment. The Extracellular segment spans residues 145–157 (GACTFINRFTRLA). Residues 158–178 (GELFGILIAMLFMQEAIRGIV) form a helical membrane-spanning segment. Topologically, residues 179-197 (DEFGVPGRTNPRSAEFQPA) are cytoplasmic. A helical transmembrane segment spans residues 198-218 (WVFANGMFGLVLSSGLLYTGL). The Extracellular portion of the chain corresponds to 219 to 234 (KSRKARSWRFGAEWLR). Residues 235 to 255 (GFIADYGVPVMVVVWTCISYI) form a helical membrane-spanning segment. Topologically, residues 256–291 (PWKSVPQGIPRRLVSPNPWSPGAYQNWTVIKEMVDV) are cytoplasmic. The chain crosses the membrane as a helical span at residues 292–312 (PVLYILLAVVPASMIAVLYYF). Residues 313–339 (DHSVASQLAQQEDFNLRKPPAYHYDLF) are Extracellular-facing. Residues 340–360 (LLGFLTILCGLIGIPPSNGVI) form a helical membrane-spanning segment. At 361–463 (PQSPMHTKSL…ILPVEVKEQR (103 aa)) the chain is on the cytoplasmic side. A helical membrane pass occupies residues 464–484 (VSNFLQAMMVAGCVAAMPLIK). The Extracellular portion of the chain corresponds to 485 to 556 (RIPSSVLWGY…LFQTAYLLVC (72 aa)). Residues 557 to 577 (FGITWVPVAGVLFPLMIMFLV) traverse the membrane as a helical segment. Residues 578–732 (PVRQYVLPNF…QRLSNLGKSV (155 aa)) are Cytoplasmic-facing. Residues 695-732 (GGGEISPRSSAGRAPFSPRSATGGGGGEQRLSNLGKSV) are disordered.

Belongs to the anion exchanger (TC 2.A.31.3) family.

Its subcellular location is the membrane. In terms of biological role, probable boron transporter. Boron is essential for maintaining the integrity of plants cell walls. The protein is Probable boron transporter 3 (BOR3) of Arabidopsis thaliana (Mouse-ear cress).